A 33-amino-acid chain; its full sequence is Alpha-amanitin proprotein (33 aa).

A propeptide spanning residues 1–10 is cleaved from the precursor; the sequence is MSDINATRLP. A (3R,4R)-4,5-dihydroxyisoleucine; in form alpha-amanitin modification is found at I11. A (3R,4S)-4-hydroxyisoleucine; in form gamma-amanitin modification is found at I11. Residues 11-18 constitute a cross-link (cyclopeptide (Ile-Pro)); the sequence is IWGIGCNP. Residues 12–16 constitute a cross-link (2'-cysteinyl-6'-hydroxytryptophan sulfoxide (Trp-Cys)); that stretch reads WGIGC. The residue at position 18 (P18) is a 4-hydroxyproline. Positions 19-33 are excised as a propeptide; that stretch reads CVGDEVTALITRGEA.

Belongs to the MSDIN fungal toxin family. Post-translationally, processed by the macrocyclase-peptidase enzyme POPB to yield a toxic cyclic decapeptide. POPB first removes 10 residues from the N-terminus. Conformational trapping of the remaining peptide forces the enzyme to release this intermediate rather than proceed to macrocyclization. The enzyme rebinds the remaining peptide in a different conformation and catalyzes macrocyclization of the N-terminal 8 residues.

Functionally, major toxin belonging to the bicyclic octapeptides amatoxins that acts by binding non-competitively to RNA polymerase II and greatly slowing the elongation of transcripts from target promoters. The protein is Alpha-amanitin proprotein of Amanita pallidorosea.